Here is a 104-residue protein sequence, read N- to C-terminus: Fluoride-specific ion channel FluC 2 (104 aa).

A run of 3 helical transmembrane segments spans residues 22–42 (IGPY…LAAV), 48–68 (LVMA…STLA), and 82–102 (MLLG…WCGL). Gly-59 and Ser-62 together coordinate Na(+).

The protein belongs to the fluoride channel Fluc/FEX (TC 1.A.43) family.

It localises to the cell membrane. It catalyses the reaction fluoride(in) = fluoride(out). With respect to regulation, na(+) is not transported, but it plays an essential structural role and its presence is essential for fluoride channel function. In terms of biological role, fluoride-specific ion channel. Important for reducing fluoride concentration in the cell, thus reducing its toxicity. This is Fluoride-specific ion channel FluC 2 from Corynebacterium diphtheriae (strain ATCC 700971 / NCTC 13129 / Biotype gravis).